We begin with the raw amino-acid sequence, 1297 residues long: Phosphoribosylformylglycinamidine synthase (1297 aa).

The tract at residues Pro304–Gly323 is disordered. ATP is bound by residues Gly307 to Asp318 and Ala678. 4 residues coordinate Mg(2+): Asp679, Glu718, Asn722, and Asp886. Ser888 is an ATP binding site. Residues Arg1043 to Gly1297 form the Glutamine amidotransferase type-1 domain. Cys1137 acts as the Nucleophile in catalysis. Active-site residues include His1262 and Glu1264.

This sequence in the N-terminal section; belongs to the FGAMS family. Monomer.

It localises to the cytoplasm. It catalyses the reaction N(2)-formyl-N(1)-(5-phospho-beta-D-ribosyl)glycinamide + L-glutamine + ATP + H2O = 2-formamido-N(1)-(5-O-phospho-beta-D-ribosyl)acetamidine + L-glutamate + ADP + phosphate + H(+). Its pathway is purine metabolism; IMP biosynthesis via de novo pathway; 5-amino-1-(5-phospho-D-ribosyl)imidazole from N(2)-formyl-N(1)-(5-phospho-D-ribosyl)glycinamide: step 1/2. Its function is as follows. Phosphoribosylformylglycinamidine synthase involved in the purines biosynthetic pathway. Catalyzes the ATP-dependent conversion of formylglycinamide ribonucleotide (FGAR) and glutamine to yield formylglycinamidine ribonucleotide (FGAM) and glutamate. This Histophilus somni (strain 129Pt) (Haemophilus somnus) protein is Phosphoribosylformylglycinamidine synthase.